Consider the following 384-residue polypeptide: Cytochrome b (384 aa).

The next 4 membrane-spanning stretches (helical) occupy residues 33–53 (YGSLLFLCLIIQIATGLFLAM), 77–98 (WLIRNMHANGASFFFICLYLHI), 113–133 (WNVGVILFLLVMMTAFVGYVL), and 178–198 (FFAFHFLFPFVIAAAAVIHLL). Heme b is bound by residues histidine 83 and histidine 97. Histidine 182 and histidine 196 together coordinate heme b. Histidine 201 is a binding site for a ubiquinone. Transmembrane regions (helical) follow at residues 226–246 (YKDLLGFALMLLALTSLALFT), 288–308 (LGGVLALLFSILVLMVVPILH), 320–340 (LSQMLFWTLVADVLILTWIGG), and 347–367 (FIIIGQVASVLYFMLFLVLMP).

Belongs to the cytochrome b family. In terms of assembly, the cytochrome bc1 complex contains 3 respiratory subunits (MT-CYB, CYC1 and UQCRFS1), 2 core proteins (UQCRC1 and UQCRC2) and probably 6 low-molecular weight proteins. Heme b is required as a cofactor.

Its subcellular location is the mitochondrion inner membrane. Component of the ubiquinol-cytochrome c reductase complex (complex III or cytochrome b-c1 complex) that is part of the mitochondrial respiratory chain. The b-c1 complex mediates electron transfer from ubiquinol to cytochrome c. Contributes to the generation of a proton gradient across the mitochondrial membrane that is then used for ATP synthesis. The chain is Cytochrome b (mt-cyb) from Anoplogaster cornuta (Common fangtooth).